We begin with the raw amino-acid sequence, 312 residues long: Ribosomal RNA small subunit methyltransferase H (312 aa).

Residues 35–37, D55, D101, and Q108 each bind S-adenosyl-L-methionine; that span reads GGH. The interval 285–306 is disordered; it reads ALKPSEHEVTENSRSRSSVLRV. Positions 287 to 298 are enriched in basic and acidic residues; sequence KPSEHEVTENSR.

Belongs to the methyltransferase superfamily. RsmH family.

It localises to the cytoplasm. It catalyses the reaction cytidine(1402) in 16S rRNA + S-adenosyl-L-methionine = N(4)-methylcytidine(1402) in 16S rRNA + S-adenosyl-L-homocysteine + H(+). Functionally, specifically methylates the N4 position of cytidine in position 1402 (C1402) of 16S rRNA. This is Ribosomal RNA small subunit methyltransferase H from Aeromonas salmonicida (strain A449).